Reading from the N-terminus, the 284-residue chain is Bifunctional protein FolD 1 (284 aa).

NADP(+) contacts are provided by residues 166–168 (GAS) and Ile-232.

Belongs to the tetrahydrofolate dehydrogenase/cyclohydrolase family. In terms of assembly, homodimer.

It carries out the reaction (6R)-5,10-methylene-5,6,7,8-tetrahydrofolate + NADP(+) = (6R)-5,10-methenyltetrahydrofolate + NADPH. It catalyses the reaction (6R)-5,10-methenyltetrahydrofolate + H2O = (6R)-10-formyltetrahydrofolate + H(+). It functions in the pathway one-carbon metabolism; tetrahydrofolate interconversion. Its function is as follows. Catalyzes the oxidation of 5,10-methylenetetrahydrofolate to 5,10-methenyltetrahydrofolate and then the hydrolysis of 5,10-methenyltetrahydrofolate to 10-formyltetrahydrofolate. The polypeptide is Bifunctional protein FolD 1 (Pseudomonas syringae pv. syringae (strain B728a)).